We begin with the raw amino-acid sequence, 352 residues long: MSGNTFGKIFTVTTCGESHGDSLAAIIDGCPSNIPLCEADIQLELDRRKPGQSKFTTQRKEPDEVKIISGVFEGKTTGTPIGLIIKNQDQKSKDYSEIKDKFRPGHADYTYFKKYGIRDYRGGGRSSARETAMRVAAGAIAKKILKHYGIEIYGFCSQIGSLKIDFIDKDFINQNPFFIANKNAVPACEDLIHSIRKQGDSIGAEVTVVATGLEAGLGRPVFDRLDASIAYAMMSINAVKAVSIGDGFDCVAQKGSQHRDEITQQQGFLSNHAGGILGGISTGQDIIAKLAFKPTSSILQPGKSIDVQGNDTTVITKGRHDPCVGIRGVPIAEAMLALVLVDELLITRSYRD.

Arginine 48 provides a ligand contact to NADP(+). FMN-binding positions include 125–127, 237–238, glycine 278, 293–297, and arginine 319; these read RSS, NA, and KPTSS.

This sequence belongs to the chorismate synthase family. Homotetramer. Requires FMNH2 as cofactor.

The enzyme catalyses 5-O-(1-carboxyvinyl)-3-phosphoshikimate = chorismate + phosphate. It functions in the pathway metabolic intermediate biosynthesis; chorismate biosynthesis; chorismate from D-erythrose 4-phosphate and phosphoenolpyruvate: step 7/7. Functionally, catalyzes the anti-1,4-elimination of the C-3 phosphate and the C-6 proR hydrogen from 5-enolpyruvylshikimate-3-phosphate (EPSP) to yield chorismate, which is the branch point compound that serves as the starting substrate for the three terminal pathways of aromatic amino acid biosynthesis. This reaction introduces a second double bond into the aromatic ring system. The sequence is that of Chorismate synthase from Francisella tularensis subsp. tularensis (strain FSC 198).